The following is a 485-amino-acid chain: NADH-quinone oxidoreductase subunit N (485 aa).

14 helical membrane passes run 10–30 (ILPE…GLFL), 40–60 (IFFQ…EYLI), 71–91 (VVFS…AVFV), 107–127 (GDFY…TAAH), 129–149 (LVTI…LIAI), 164–184 (FVLG…VYGM), 209–229 (FLLV…GAFP), 248–268 (IVAT…LFVG), 276–296 (WIYL…LVAL), 304–324 (LLGY…TLNP), 336–356 (VIVY…ISVG), 377–397 (AFIL…GGFI), 410–430 (GNYF…FYYV), and 454–474 (LIAL…PMLL).

This sequence belongs to the complex I subunit 2 family. NDH-1 is composed of 14 different subunits. Subunits NuoA, H, J, K, L, M, N constitute the membrane sector of the complex.

It is found in the cell inner membrane. It carries out the reaction a quinone + NADH + 5 H(+)(in) = a quinol + NAD(+) + 4 H(+)(out). NDH-1 shuttles electrons from NADH, via FMN and iron-sulfur (Fe-S) centers, to quinones in the respiratory chain. The immediate electron acceptor for the enzyme in this species is believed to be ubiquinone. Couples the redox reaction to proton translocation (for every two electrons transferred, four hydrogen ions are translocated across the cytoplasmic membrane), and thus conserves the redox energy in a proton gradient. The chain is NADH-quinone oxidoreductase subunit N from Francisella tularensis subsp. holarctica (strain FTNF002-00 / FTA).